A 308-amino-acid polypeptide reads, in one-letter code: Protoheme IX farnesyltransferase (308 aa).

The next 8 helical transmembrane spans lie at 31 to 51 (VIEL…RGTV), 53 to 73 (PLLI…ANAL), 102 to 122 (NALV…WWTT), 124 to 144 (LLSG…YTLL), 149 to 169 (TSQN…IGWS), 170 to 190 (AVTG…FFWT), 240 to 260 (LALA…VWFL), and 288 to 308 (YLAV…PHLF).

Belongs to the UbiA prenyltransferase family. Protoheme IX farnesyltransferase subfamily.

The protein resides in the cell membrane. The catalysed reaction is heme b + (2E,6E)-farnesyl diphosphate + H2O = Fe(II)-heme o + diphosphate. It functions in the pathway porphyrin-containing compound metabolism; heme O biosynthesis; heme O from protoheme: step 1/1. Its function is as follows. Converts heme B (protoheme IX) to heme O by substitution of the vinyl group on carbon 2 of heme B porphyrin ring with a hydroxyethyl farnesyl side group. In Mycobacterium avium (strain 104), this protein is Protoheme IX farnesyltransferase.